Here is a 123-residue protein sequence, read N- to C-terminus: Protein HesB, vegetative (123 aa).

Belongs to the HesB/IscA family.

May be required for efficient nitrogen fixation. In Trichormus variabilis (strain ATCC 29413 / PCC 7937) (Anabaena variabilis), this protein is Protein HesB, vegetative (hesB2).